The following is a 200-amino-acid chain: 3-isopropylmalate dehydratase small subunit (200 aa).

It belongs to the LeuD family. LeuD type 1 subfamily. As to quaternary structure, heterodimer of LeuC and LeuD.

It carries out the reaction (2R,3S)-3-isopropylmalate = (2S)-2-isopropylmalate. It participates in amino-acid biosynthesis; L-leucine biosynthesis; L-leucine from 3-methyl-2-oxobutanoate: step 2/4. Functionally, catalyzes the isomerization between 2-isopropylmalate and 3-isopropylmalate, via the formation of 2-isopropylmaleate. This Vibrio vulnificus (strain YJ016) protein is 3-isopropylmalate dehydratase small subunit.